We begin with the raw amino-acid sequence, 503 residues long: Aromatase (503 aa).

A run of 3 helical transmembrane segments spans residues 19–39 (EVVPIASIAILLLTGFLLLVW), 53–73 (FLGIGPLISHCRFLWMGIGSA), and 303–323 (MLIAAPDTMSVSVFFMLFLIA). Substrate-binding residues include Asp-309 and Met-374. Cys-437 provides a ligand contact to heme.

This sequence belongs to the cytochrome P450 family. It depends on heme as a cofactor.

It is found in the endoplasmic reticulum membrane. Its subcellular location is the microsome membrane. It carries out the reaction testosterone + 3 reduced [NADPH--hemoprotein reductase] + 3 O2 = 17beta-estradiol + formate + 3 oxidized [NADPH--hemoprotein reductase] + 4 H2O + 4 H(+). It catalyses the reaction androst-4-ene-3,17-dione + 3 reduced [NADPH--hemoprotein reductase] + 3 O2 = estrone + formate + 3 oxidized [NADPH--hemoprotein reductase] + 4 H2O + 4 H(+). The catalysed reaction is androst-4-ene-3,17-dione + reduced [NADPH--hemoprotein reductase] + O2 = 19-hydroxyandrost-4-ene-3,17-dione + oxidized [NADPH--hemoprotein reductase] + H2O + H(+). The enzyme catalyses 19-hydroxyandrost-4-ene-3,17-dione + reduced [NADPH--hemoprotein reductase] + O2 = 19-oxo-androst-4-ene-3,17-dione + oxidized [NADPH--hemoprotein reductase] + 2 H2O + H(+). It carries out the reaction 19-oxo-androst-4-ene-3,17-dione + reduced [NADPH--hemoprotein reductase] + O2 = estrone + formate + oxidized [NADPH--hemoprotein reductase] + H2O + 2 H(+). It catalyses the reaction estrone + reduced [NADPH--hemoprotein reductase] + O2 = 2-hydroxyestrone + oxidized [NADPH--hemoprotein reductase] + H2O + H(+). The catalysed reaction is 17beta-hydroxy-5alpha-androstan-3-one + reduced [NADPH--hemoprotein reductase] + O2 = 17beta,19-dihydroxy-3-oxo-5alpha-androstanone + oxidized [NADPH--hemoprotein reductase] + H2O + H(+). The enzyme catalyses 17beta,19-dihydroxy-3-oxo-5alpha-androstanone + reduced [NADPH--hemoprotein reductase] + O2 = 17beta-hydroxy-3,19-dioxo-5alpha-androstanone + oxidized [NADPH--hemoprotein reductase] + 2 H2O + H(+). It carries out the reaction 17beta-hydroxy-3,19-dioxo-5alpha-androstanone + reduced [NADPH--hemoprotein reductase] + O2 = 17beta-hydroxy-3-oxo-19-nor-5alpha-androst-1-ene + formate + oxidized [NADPH--hemoprotein reductase] + H2O + 2 H(+). It participates in steroid hormone biosynthesis. In terms of biological role, a cytochrome P450 monooxygenase that catalyzes the conversion of C19 androgens, androst-4-ene-3,17-dione (androstenedione) and testosterone to the C18 estrogens, estrone and estradiol, respectively. Catalyzes three successive oxidations of C19 androgens: two conventional oxidations at C19 yielding 19-hydroxy and 19-oxo/19-aldehyde derivatives, followed by a third oxidative aromatization step that involves C1-beta hydrogen abstraction combined with cleavage of the C10-C19 bond to yield a phenolic A ring and formic acid. Alternatively, the third oxidative reaction yields a 19-norsteroid and formic acid. Converts dihydrotestosterone to delta1,10-dehydro 19-nordihydrotestosterone and may play a role in homeostasis of this potent androgen. Also displays 2-hydroxylase activity toward estrone. Mechanistically, uses molecular oxygen inserting one oxygen atom into a substrate, and reducing the second into a water molecule, with two electrons provided by NADPH via cytochrome P450 reductase (CPR; NADPH-ferrihemoprotein reductase). The polypeptide is Aromatase (CYP19A1) (Capra hircus (Goat)).